The chain runs to 831 residues: Probable inactive serine/threonine-protein kinase DDB_G0274613 (831 aa).

The segment at 9 to 63 (CSICSEEVIDFAAIFSSNKKFGDKACKHNFCVSCLTYLMEYNTRNKKALCCPICR) adopts an RING-type zinc-finger fold. Residues 83–348 (RKLSSAQIFL…LEEMKLLYQF (266 aa)) adopt a coiled-coil conformation. The 374-residue stretch at 414-787 (QIHKVSIGNG…ANQAAFHKFF (374 aa)) folds into the Protein kinase domain. Residues 657–703 (NNNNNNNNNNNNNNNNNNNNNNNNNNNNNNNNNNNNNNNNNIESNFN) form a disordered region.

Belongs to the protein kinase superfamily. CMGC Ser/Thr protein kinase family.

The polypeptide is Probable inactive serine/threonine-protein kinase DDB_G0274613 (Dictyostelium discoideum (Social amoeba)).